Reading from the N-terminus, the 324-residue chain is Delta-aminolevulinic acid dehydratase (324 aa).

3 residues coordinate Zn(2+): cysteine 118, cysteine 120, and cysteine 128. The active-site Schiff-base intermediate with substrate is the lysine 195. 5-aminolevulinate contacts are provided by arginine 205 and arginine 217. Glutamate 233 is a binding site for Mg(2+). Lysine 248 acts as the Schiff-base intermediate with substrate in catalysis. Residues serine 274 and tyrosine 313 each contribute to the 5-aminolevulinate site.

The protein belongs to the ALAD family. Homooctamer. Requires Zn(2+) as cofactor.

It carries out the reaction 2 5-aminolevulinate = porphobilinogen + 2 H2O + H(+). Its pathway is porphyrin-containing compound metabolism; protoporphyrin-IX biosynthesis; coproporphyrinogen-III from 5-aminolevulinate: step 1/4. Catalyzes an early step in the biosynthesis of tetrapyrroles. Binds two molecules of 5-aminolevulinate per subunit, each at a distinct site, and catalyzes their condensation to form porphobilinogen. This is Delta-aminolevulinic acid dehydratase (hemB) from Staphylococcus aureus (strain NCTC 8325 / PS 47).